A 458-amino-acid chain; its full sequence is tRNA modification GTPase MnmE (458 aa).

(6S)-5-formyl-5,6,7,8-tetrahydrofolate-binding residues include Arg-23, Glu-80, and Lys-122. The region spanning 218 to 380 (GMKIVIAGRP…LREHLQQTMG (163 aa)) is the TrmE-type G domain. Asn-228 lines the K(+) pocket. GTP contacts are provided by residues 228–233 (NVGKSS), 247–253 (TQIPGTT), 272–275 (DTAG), and 361–363 (SAR). Ser-232 contacts Mg(2+). K(+) is bound by residues Thr-247, Ile-249, and Thr-252. Thr-253 is a binding site for Mg(2+). Residue Lys-458 participates in (6S)-5-formyl-5,6,7,8-tetrahydrofolate binding.

The protein belongs to the TRAFAC class TrmE-Era-EngA-EngB-Septin-like GTPase superfamily. TrmE GTPase family. Homodimer. Heterotetramer of two MnmE and two MnmG subunits. The cofactor is K(+).

It localises to the cytoplasm. Functionally, exhibits a very high intrinsic GTPase hydrolysis rate. Involved in the addition of a carboxymethylaminomethyl (cmnm) group at the wobble position (U34) of certain tRNAs, forming tRNA-cmnm(5)s(2)U34. In Hamiltonella defensa subsp. Acyrthosiphon pisum (strain 5AT), this protein is tRNA modification GTPase MnmE.